Consider the following 326-residue polypeptide: Ribosomal large subunit pseudouridine synthase D (326 aa).

The S4 RNA-binding domain occupies 18 to 91 (QRLDQALAEM…IPLDIVYEDD (74 aa)). Residue Asp139 is part of the active site. Residues 183 to 203 (GTVNEPISRHPTKRTHMSVHP) are disordered.

This sequence belongs to the pseudouridine synthase RluA family.

The protein localises to the cytoplasm. The enzyme catalyses uridine(1911/1915/1917) in 23S rRNA = pseudouridine(1911/1915/1917) in 23S rRNA. Its function is as follows. Responsible for synthesis of pseudouridine from uracil at positions 1911, 1915 and 1917 in 23S ribosomal RNA. In Salmonella typhi, this protein is Ribosomal large subunit pseudouridine synthase D (rluD).